Consider the following 165-residue polypeptide: MSDADPSLQRIISVELDEGSIVWRNPDVEQERRVAIFDLIEENRFVPQRGHPDGYAGPYRLKLRVEDGRLIFEIAREDGSPLEAVILGLGRFRRPIRDYFAICDSYYQAIKTSTAQQIETVDMARRALHNEAAEMLMDRLDGKIAVDFDTARRLFTLICVLHIKG.

It belongs to the UPF0262 family.

This is UPF0262 protein Sala_0765 from Sphingopyxis alaskensis (strain DSM 13593 / LMG 18877 / RB2256) (Sphingomonas alaskensis).